The primary structure comprises 252 residues: UPF0246 protein Fjoh_4905 (252 aa).

This sequence belongs to the UPF0246 family.

This is UPF0246 protein Fjoh_4905 from Flavobacterium johnsoniae (strain ATCC 17061 / DSM 2064 / JCM 8514 / BCRC 14874 / CCUG 350202 / NBRC 14942 / NCIMB 11054 / UW101) (Cytophaga johnsonae).